A 382-amino-acid polypeptide reads, in one-letter code: Lipid-A-disaccharide synthase (382 aa).

The protein belongs to the LpxB family.

It catalyses the reaction 2-N,3-O-bis[(3R)-3-hydroxytetradecanoyl]-alpha-D-glucosaminyl 1-phosphate + UDP-2-N,3-O-bis[(3R)-3-hydroxytetradecanoyl]-alpha-D-glucosamine = lipid A disaccharide (E. coli) + UDP + H(+). The enzyme catalyses a lipid X + a UDP-2-N,3-O-bis[(3R)-3-hydroxyacyl]-alpha-D-glucosamine = a lipid A disaccharide + UDP + H(+). It participates in glycolipid biosynthesis; lipid IV(A) biosynthesis; lipid IV(A) from (3R)-3-hydroxytetradecanoyl-[acyl-carrier-protein] and UDP-N-acetyl-alpha-D-glucosamine: step 5/6. Functionally, condensation of UDP-2,3-diacylglucosamine and 2,3-diacylglucosamine-1-phosphate to form lipid A disaccharide, a precursor of lipid A, a phosphorylated glycolipid that anchors the lipopolysaccharide to the outer membrane of the cell. This is Lipid-A-disaccharide synthase from Salmonella paratyphi A (strain AKU_12601).